We begin with the raw amino-acid sequence, 192 residues long: ATP synthase subunit b 2 (192 aa).

The chain crosses the membrane as a helical span at residues 39–59 (SGFLAQLIWLALAFGLLYYLM).

The protein belongs to the ATPase B chain family. As to quaternary structure, F-type ATPases have 2 components, F(1) - the catalytic core - and F(0) - the membrane proton channel. F(1) has five subunits: alpha(3), beta(3), gamma(1), delta(1), epsilon(1). F(0) has three main subunits: a(1), b(2) and c(10-14). The alpha and beta chains form an alternating ring which encloses part of the gamma chain. F(1) is attached to F(0) by a central stalk formed by the gamma and epsilon chains, while a peripheral stalk is formed by the delta and b chains.

Its subcellular location is the cell inner membrane. F(1)F(0) ATP synthase produces ATP from ADP in the presence of a proton or sodium gradient. F-type ATPases consist of two structural domains, F(1) containing the extramembraneous catalytic core and F(0) containing the membrane proton channel, linked together by a central stalk and a peripheral stalk. During catalysis, ATP synthesis in the catalytic domain of F(1) is coupled via a rotary mechanism of the central stalk subunits to proton translocation. Functionally, component of the F(0) channel, it forms part of the peripheral stalk, linking F(1) to F(0). The b'-subunit is a diverged and duplicated form of b found in plants and photosynthetic bacteria. This is ATP synthase subunit b 2 (atpF2) from Methylobacterium radiotolerans (strain ATCC 27329 / DSM 1819 / JCM 2831 / NBRC 15690 / NCIMB 10815 / 0-1).